We begin with the raw amino-acid sequence, 208 residues long: Guanylate kinase (208 aa).

The Guanylate kinase-like domain maps to 4 to 182 (GQLYIISAPS…ALEELKSVFR (179 aa)). Residue 11–18 (APSGAGKT) coordinates ATP.

Belongs to the guanylate kinase family.

It is found in the cytoplasm. The catalysed reaction is GMP + ATP = GDP + ADP. Functionally, essential for recycling GMP and indirectly, cGMP. The polypeptide is Guanylate kinase (Hahella chejuensis (strain KCTC 2396)).